A 110-amino-acid polypeptide reads, in one-letter code: Large ribosomal subunit protein uL22 (110 aa).

It belongs to the universal ribosomal protein uL22 family. Part of the 50S ribosomal subunit.

In terms of biological role, this protein binds specifically to 23S rRNA; its binding is stimulated by other ribosomal proteins, e.g. L4, L17, and L20. It is important during the early stages of 50S assembly. It makes multiple contacts with different domains of the 23S rRNA in the assembled 50S subunit and ribosome. Functionally, the globular domain of the protein is located near the polypeptide exit tunnel on the outside of the subunit, while an extended beta-hairpin is found that lines the wall of the exit tunnel in the center of the 70S ribosome. This Buchnera aphidicola subsp. Acyrthosiphon pisum (strain 5A) protein is Large ribosomal subunit protein uL22.